The primary structure comprises 613 residues: Portal protein (613 aa).

The interval 577-613 (ATGGDHGIRQAPSARGDTEPDHAKSKPARDPPPGAGS) is disordered. Residues 592–605 (GDTEPDHAKSKPAR) are compositionally biased toward basic and acidic residues.

This sequence belongs to the herpesviridae portal protein family. As to quaternary structure, homododecamerizes. Interacts with terminase subunits TRM1 and TRM3.

It localises to the virion. Its subcellular location is the host nucleus. The protein resides in the host cytoplasm. Its function is as follows. Forms a portal in the viral capsid through which viral DNA is translocated during DNA packaging. Assembles as a dodecamer at a single fivefold axe of the T=16 icosahedric capsid. Binds to the molecular motor that translocates the viral DNA, termed terminase. This chain is Portal protein, found in Epstein-Barr virus (strain B95-8) (HHV-4).